The sequence spans 590 residues: Putative ferric-chelate reductase 1 (590 aa).

The helical transmembrane segment at 2–22 threads the bilayer; it reads NPLGLFLIYLYTCALTPVSGY. In terms of domain architecture, Reelin spans 12-179; sequence YTCALTPVSG…APKIPSSTIP (168 aa). A DOMON domain is found at 217 to 330; that stretch reads ECFFLSFRKD…RSYFIFLADG (114 aa). One can recognise a Cytochrome b561 domain in the interval 334 to 533; the sequence is DGLLYRHHRQ…VFVDLLLEAH (200 aa). A helical transmembrane segment spans residues 371–391; the sequence is LHGAMMFIAWMTTVSIGVIIA. Heme b contacts are provided by His372 and His413. The next 2 membrane-spanning stretches (helical) occupy residues 416 to 436 and 445 to 465; these read LMITTVFLTVVAFVLPFIYRG and HPHLGVTVMILTVLQPVLAVF. His445 is a binding site for heme b. N-linked (GlcNAc...) asparagine glycosylation is present at Asn478. Position 481 (His481) interacts with heme b. A run of 3 helical transmembrane segments spans residues 482 to 502, 517 to 537, and 567 to 587; these read WATGTAARIIAVAAMFLGMDL, IGFVLWHVFVDLLLEAHGFCL, and IVMTVYICGNLAFLITFLAAI.

It belongs to the FRRS1 family. Heme b serves as cofactor.

The protein localises to the membrane. Functionally, putative ferric-chelate reductases reduce Fe(3+) to Fe(2+) before its transport from the endosome to the cytoplasm. This is Putative ferric-chelate reductase 1 (frrs1) from Xenopus laevis (African clawed frog).